The primary structure comprises 290 residues: Acetyl-coenzyme A carboxylase carboxyl transferase subunit beta (290 aa).

Residues 28–290 form the CoA carboxyltransferase N-terminal domain; the sequence is LMNKCSKCGT…TVREGLSHGG (263 aa). Zn(2+)-binding residues include C32, C35, C51, and C54. The C4-type zinc finger occupies 32–54; it reads CSKCGTIQYSKELDKNLKVCSSC.

Belongs to the AccD/PCCB family. Acetyl-CoA carboxylase is a heterohexamer composed of biotin carboxyl carrier protein (AccB), biotin carboxylase (AccC) and two subunits each of ACCase subunit alpha (AccA) and ACCase subunit beta (AccD). It depends on Zn(2+) as a cofactor.

It is found in the cytoplasm. It carries out the reaction N(6)-carboxybiotinyl-L-lysyl-[protein] + acetyl-CoA = N(6)-biotinyl-L-lysyl-[protein] + malonyl-CoA. The protein operates within lipid metabolism; malonyl-CoA biosynthesis; malonyl-CoA from acetyl-CoA: step 1/1. Functionally, component of the acetyl coenzyme A carboxylase (ACC) complex. Biotin carboxylase (BC) catalyzes the carboxylation of biotin on its carrier protein (BCCP) and then the CO(2) group is transferred by the transcarboxylase to acetyl-CoA to form malonyl-CoA. The protein is Acetyl-coenzyme A carboxylase carboxyl transferase subunit beta of Paenibacillus sp. (strain JDR-2).